The primary structure comprises 443 residues: Tubulin beta-3 chain (443 aa).

GTP is bound by residues Q11, E69, S138, G142, T143, G144, N204, and N226. E69 serves as a coordination point for Mg(2+).

Belongs to the tubulin family. As to quaternary structure, dimer of alpha and beta chains. A typical microtubule is a hollow water-filled tube with an outer diameter of 25 nm and an inner diameter of 15 nM. Alpha-beta heterodimers associate head-to-tail to form protofilaments running lengthwise along the microtubule wall with the beta-tubulin subunit facing the microtubule plus end conferring a structural polarity. Microtubules usually have 13 protofilaments but different protofilament numbers can be found in some organisms and specialized cells. Mg(2+) is required as a cofactor.

The protein resides in the cytoplasm. It localises to the cytoskeleton. In terms of biological role, tubulin is the major constituent of microtubules, a cylinder consisting of laterally associated linear protofilaments composed of alpha- and beta-tubulin heterodimers. Microtubules grow by the addition of GTP-tubulin dimers to the microtubule end, where a stabilizing cap forms. Below the cap, tubulin dimers are in GDP-bound state, owing to GTPase activity of alpha-tubulin. This Echinococcus multilocularis (Fox tapeworm) protein is Tubulin beta-3 chain (TUB-3).